Consider the following 204-residue polypeptide: Urease accessory protein UreG (204 aa).

15–22 is a GTP binding site; that stretch reads GPVGSGKT.

It belongs to the SIMIBI class G3E GTPase family. UreG subfamily. In terms of assembly, homodimer. UreD, UreF and UreG form a complex that acts as a GTP-hydrolysis-dependent molecular chaperone, activating the urease apoprotein by helping to assemble the nickel containing metallocenter of UreC. The UreE protein probably delivers the nickel.

Its subcellular location is the cytoplasm. Functionally, facilitates the functional incorporation of the urease nickel metallocenter. This process requires GTP hydrolysis, probably effectuated by UreG. This Methylobacterium sp. (strain 4-46) protein is Urease accessory protein UreG.